A 617-amino-acid polypeptide reads, in one-letter code: Lipoteichoic acid synthase-like YvgJ (617 aa).

Residues 1–10 are Cytoplasmic-facing; sequence MKGTFFHNQR. The helical transmembrane segment at 11–31 threads the bilayer; the sequence is FLCFSILFMWIKTYVIYKLGF. At 32-41 the chain is on the extracellular side; that stretch reads DLQIDTLLEE. A helical membrane pass occupies residues 42–62; that stretch reads LMLLVNPLSFILPLFGIGLFL. Residues 63–68 lie on the Cytoplasmic side of the membrane; sequence KENKQR. Residues 69–89 form a helical membrane-spanning segment; it reads AFLLIANLVLTVILISNTIFY. At 90 to 115 the chain is on the extracellular side; it reads GFYIDFITIPVLFQASNMSDMGSSVK. The chain crosses the membrane as a helical span at residues 116 to 136; that stretch reads ELFHPLFIALFVDLVFLLLFA. The Cytoplasmic portion of the chain corresponds to 137–153; that stretch reads RKTKHPQTKAAPHTIKR. A helical transmembrane segment spans residues 154–171; that stretch reads YYAASCGMLLCTLALAEV. At 172-617 the chain is on the extracellular side; it reads QQPKLLAHSF…LNGDLLRFSE (446 aa). Mn(2+)-binding residues include Glu251 and Thr293. Thr293 is a catalytic residue. His408 contacts substrate. Mn(2+) contacts are provided by Asp467 and His468.

It belongs to the LTA synthase family. In terms of processing, proteolytically cleaved.

It localises to the cell membrane. The protein localises to the secreted. In Bacillus subtilis (strain 168), this protein is Lipoteichoic acid synthase-like YvgJ (yvgJ).